A 966-amino-acid polypeptide reads, in one-letter code: Translation initiation factor IF-2 (966 aa).

Composition is skewed to basic and acidic residues over residues 99–113 (KRDE…EAAD), 123–183 (EQAR…KAEE), 197–212 (DASR…RVAV), 220–249 (AADD…EAEA), and 266–277 (PSERKAEEKKAE). The disordered stretch occupies residues 99–382 (KRDEAGADQH…NFQAPTEPVV (284 aa)). The segment covering 304-315 (AATTTTTTATTT) has biased composition (low complexity). The segment covering 346–359 (SSGGVGGWRGGPRG) has biased composition (gly residues). The 170-residue stretch at 466-635 (PRPPVVTVMG…LLQAEVLELK (170 aa)) folds into the tr-type G domain. The G1 stretch occupies residues 475-482 (GHVDHGKT). Residue 475–482 (GHVDHGKT) participates in GTP binding. A G2 region spans residues 500–504 (GITQH). The interval 521 to 524 (DTPG) is G3. GTP is bound by residues 521-525 (DTPGH) and 575-578 (NKID). The interval 575 to 578 (NKID) is G4. The segment at 611–613 (SAK) is G5.

Belongs to the TRAFAC class translation factor GTPase superfamily. Classic translation factor GTPase family. IF-2 subfamily.

It localises to the cytoplasm. In terms of biological role, one of the essential components for the initiation of protein synthesis. Protects formylmethionyl-tRNA from spontaneous hydrolysis and promotes its binding to the 30S ribosomal subunits. Also involved in the hydrolysis of GTP during the formation of the 70S ribosomal complex. In Cupriavidus pinatubonensis (strain JMP 134 / LMG 1197) (Cupriavidus necator (strain JMP 134)), this protein is Translation initiation factor IF-2.